Here is a 176-residue protein sequence, read N- to C-terminus: Large ribosomal subunit protein uL6 (176 aa).

The protein belongs to the universal ribosomal protein uL6 family. In terms of assembly, part of the 50S ribosomal subunit.

Its function is as follows. This protein binds to the 23S rRNA, and is important in its secondary structure. It is located near the subunit interface in the base of the L7/L12 stalk, and near the tRNA binding site of the peptidyltransferase center. This is Large ribosomal subunit protein uL6 from Lactobacillus acidophilus (strain ATCC 700396 / NCK56 / N2 / NCFM).